A 522-amino-acid chain; its full sequence is MSEILEDAIKSKAWPFEEAKKILDSLNGKTPEKGYVLFETGYGPSGLPHIGTFGENARMVMVQKAFEQLSNIKTKLICFSDDMDGLRKVPSNIPNPEMVAGYMDMPLTSIPDPFGECESYGHYMNAKLRSFLDKFGFEYEFYSSTEMYKAGMFDEMLIRVLEKYDEIMELMLPTFREERKATYSPFMPICPKTGKVLQVPIHKWDAKLGTITYKDENGETIEVPVTKGHCKLQWKPDFGMRWAALKVDYEMYGKDHLANGRLYSEICRILGEKPPVQLCYELFLDENGEKISKSKGNSISVDDWLKYAPVESMALFMYQNPTRAKRLFFDVIPKNVDEYITFNQKYHLEEDRTKRFANPVYHIHHGNVPKIETFGITYSLLLNLTSVCNPSDKSVLWGFISRYEPKAMPNNSPYLDHLAEFAIRYYNDFVKAHKSYLAPSEKHKAILQDILDMLKGLPEQIEAESIQKGIYDIGMKAGYENLRDYFKDLYQILLGQSDGPRLGTFIKLYGISETMKLIEEKL.

Residues 44 to 52 carry the 'HIGH' region motif; that stretch reads PSGLPHIGT. Positions 290-294 match the 'KMSKS' region motif; that stretch reads KISKS. Position 293 (K293) interacts with ATP.

This sequence belongs to the class-I aminoacyl-tRNA synthetase family.

The protein localises to the cytoplasm. The enzyme catalyses tRNA(Lys) + L-lysine + ATP = L-lysyl-tRNA(Lys) + AMP + diphosphate. The polypeptide is Lysine--tRNA ligase (Rickettsia bellii (strain RML369-C)).